The primary structure comprises 189 residues: Protein GrpE (189 aa).

Basic and acidic residues predominate over residues 1–38 (MTKSNETERMEESEETHSSDIRSASESDHASGSDHTES). A disordered region spans residues 1 to 54 (MTKSNETERMEESEETHSSDIRSASESDHASGSDHTESADEIPTADAEQGELEQ).

It belongs to the GrpE family. In terms of assembly, homodimer.

It is found in the cytoplasm. Its function is as follows. Participates actively in the response to hyperosmotic and heat shock by preventing the aggregation of stress-denatured proteins, in association with DnaK and GrpE. It is the nucleotide exchange factor for DnaK and may function as a thermosensor. Unfolded proteins bind initially to DnaJ; upon interaction with the DnaJ-bound protein, DnaK hydrolyzes its bound ATP, resulting in the formation of a stable complex. GrpE releases ADP from DnaK; ATP binding to DnaK triggers the release of the substrate protein, thus completing the reaction cycle. Several rounds of ATP-dependent interactions between DnaJ, DnaK and GrpE are required for fully efficient folding. This Tropheryma whipplei (strain TW08/27) (Whipple's bacillus) protein is Protein GrpE.